The following is a 902-amino-acid chain: Androgen receptor (902 aa).

Residues 1–540 (MEVQLGLGRV…PIDYYFPPQK (540 aa)) are modulating. An interaction with ZNF318 region spans residues 1 to 569 (MEVQLGLGRV…GSCKVFFKRA (569 aa)). Disordered regions lie at residues 35–146 (QNPG…LSLL) and 194–224 (QQEV…YLGG). Serine 61 carries the phosphoserine; by CDK9 modification. Serine 75 is modified (phosphoserine). The span at 94 to 103 (QPSQQQSASE) shows a compositional bias: low complexity. Composition is skewed to polar residues over residues 196-205 (EVISEGSSSV) and 213-224 (APSSSKDSYLGG). Tyrosine 221 is subject to Phosphotyrosine; by CSK. At serine 254 the chain carries Phosphoserine. Tyrosine 265 is subject to Phosphotyrosine; by CSK and TNK2. Serine 290 is subject to Phosphoserine. A phosphotyrosine; by CSK mark is found at tyrosine 305, tyrosine 344, tyrosine 355, and tyrosine 360. Tyrosine 361 carries the phosphotyrosine; by CSK and TNK2 modification. Residue lysine 384 forms a Glycyl lysine isopeptide (Lys-Gly) (interchain with G-Cter in SUMO) linkage. A Phosphotyrosine; by CSK modification is found at tyrosine 391. A disordered region spans residues 439-465 (EGQLYGPGGGGGSSSPSDAGPVAPYGY). A Glycyl lysine isopeptide (Lys-Gly) (interchain with G-Cter in SUMO) cross-link involves residue lysine 503. Phosphotyrosine; by CSK occurs at positions 517 and 534. Residues 534–901 (YYFPPQKTCL…GKVKPIYFHT (368 aa)) form an interaction with LPXN region. The nuclear receptor DNA-binding region spans 541 to 614 (TCLICGDEAS…AGMTLGARKL (74 aa)). 2 NR C4-type zinc fingers span residues 542–562 (CLIC…CGSC) and 578–602 (CASR…LRKC). The segment at 554-644 (YGALTCGSCK…TEDPSQKMTV (91 aa)) is interaction with HIPK3. The segment at 574–901 (QKYLCASRND…GKVKPIYFHT (328 aa)) is interaction with CCAR1. The segment at 607 to 901 (MTLGARKLKK…GKVKPIYFHT (295 aa)) is interaction with KAT7. Position 633 is a phosphoserine (serine 633). Residues 651–882 (ECQPIFLNVL…DFPEMMAEII (232 aa)) enclose the NR LBD domain. Residues asparagine 688 and arginine 735 each coordinate 17beta-hydroxy-5alpha-androstan-3-one. Glycyl lysine isopeptide (Lys-Gly) (interchain with G-Cter in ubiquitin) cross-links involve residues lysine 828 and lysine 830. Threonine 860 is a binding site for 17beta-hydroxy-5alpha-androstan-3-one. Tyrosine 898 bears the Phosphotyrosine; by CSK mark.

Belongs to the nuclear hormone receptor family. NR3 subfamily. As to quaternary structure, binds DNA as a homodimer. Part of a ternary complex containing AR, EFCAB6/DJBP and PARK7. Interacts with HIPK3 and NR0B2 in the presence of androgen. The ligand binding domain interacts with KAT7/HBO1 in the presence of dihydrotestosterone. Interacts with EFCAB6/DJBP, PQBP1, RANBP9, RBAK, SPDEF, SRA1, TGFB1I1, ZNF318 and RREB1. Interacts with ZMIZ1/ZIMP10 and ZMIZ2/ZMIP7 which both enhance its transactivation activity. Interacts with SLC30A9 and RAD54L2/ARIP4. Interacts with MACROD1 (via macro domain). Interacts via the ligand-binding domain with LXXLL and FXXLF motifs from NCOA1, NCOA2, NCOA3 and MAGEA11. Interacts (via nuclear receptor DNA binding domain and nuclear receptor ligand binding domain) with NCOA4. The AR N-terminal poly-Gln region binds Ran resulting in enhancement of AR-mediated transactivation. Ran-binding decreases as the poly-Gln length increases. Interacts with HIP1 (via coiled coil domain). Interacts (via ligand-binding domain) with TRIM68. Interacts with TNK2. Interacts with USP26. Interacts with RNF6. Interacts (regulated by RNF6 probably through polyubiquitination) with RNF14; regulates AR transcriptional activity. Interacts with PRMT2 and TRIM24. Interacts with RACK1. Interacts with RANBP10; this interaction enhances dihydrotestosterone-induced AR transcriptional activity. Interacts with PRPF6 in a hormone-independent way; this interaction enhances dihydrotestosterone-induced AR transcriptional activity. Interacts with STK4/MST1. Interacts with ZIPK/DAPK3. Interacts with LPXN. Interacts with MAK. Part of a complex containing AR, MAK and NCOA3. Interacts with CRY1. Interacts with CCAR1 and GATA2. Interacts with BUD31. Interacts with ARID4A. Interacts with ARID4B. Interacts (via NR LBD domain) with ZBTB7A; the interaction is direct and androgen-dependent. Interacts with NCOR1. Interacts with NCOR2. Interacts with CRY2 in a ligand-dependent manner. In terms of processing, phosphorylated in prostate cancer cells in response to several growth factors including EGF. Phosphorylation is induced by c-Src kinase (CSK). Tyr-517 is one of the major phosphorylation sites and an increase in phosphorylation and Src kinase activity is associated with prostate cancer progression. Phosphorylation by TNK2 enhances the DNA-binding and transcriptional activity. Phosphorylation at Ser-61 by CDK9 regulates AR promoter selectivity and cell growth. Phosphorylation by PAK6 leads to AR-mediated transcription inhibition. Post-translationally, sumoylated on Lys-384 (major) and Lys-503. Ubiquitinated. Deubiquitinated by USP26. 'Lys-6' and 'Lys-27'-linked polyubiquitination by RNF6 modulates AR transcriptional activity and specificity. Palmitoylated by ZDHHC7 and ZDHHC21. Palmitoylation is required for plasma membrane targeting and for rapid intracellular signaling via ERK and AKT kinases and cAMP generation. In terms of tissue distribution, highest levels in the seminal vesicle, ventral prostate and coagulating gland with lower levels in the kidney and levator ani muscle.

The protein localises to the nucleus. It localises to the cytoplasm. Functionally, steroid hormone receptors are ligand-activated transcription factors that regulate eukaryotic gene expression and affect cellular proliferation and differentiation in target tissues. Transcription factor activity is modulated by bound coactivator and corepressor proteins like ZBTB7A that recruits NCOR1 and NCOR2 to the androgen response elements/ARE on target genes, negatively regulating androgen receptor signaling and androgen-induced cell proliferation. Transcription activation is also down-regulated by NR0B2. Activated, but not phosphorylated, by HIPK3 and ZIPK/DAPK3. The chain is Androgen receptor (Ar) from Rattus norvegicus (Rat).